An 89-amino-acid polypeptide reads, in one-letter code: Putative RING finger protein 121R (89 aa).

The RING-type zinc finger occupies 45–78 (CPICLIAKVNTVLECTHVLCSNCVKKINVCPICR).

In Invertebrate iridescent virus 6 (IIV-6), this protein is Putative RING finger protein 121R.